The primary structure comprises 2195 residues: Genome polyprotein (2195 aa).

Residue Gly2 is the site of N-myristoyl glycine; by host attachment. At 2–1505 the chain is on the cytoplasmic side; the sequence is GAQVSTQKTG…HVSRAFICLQ (1504 aa). The segment at 567–583 is amphipathic alpha-helix; it reads LLQGDVVEAVENAVARV. Active-site for protease 2A activity residues include His882 and Asp900. Zn(2+) contacts are provided by Cys917 and Cys919. Cys971 (for protease 2A activity) is an active-site residue. Residues Cys977 and His979 each contribute to the Zn(2+) site. Residues 1111 to 1183 are membrane-binding; that stretch reads NNGWLKKFTE…EQSAPSQSDQ (73 aa). Positions 1111–1249 are oligomerization; the sequence is NNGWLKKFTE…SPGAGKSVAT (139 aa). An RNA-binding region spans residues 1132–1136; the sequence is SIKIQ. One can recognise an SF3 helicase domain in the interval 1215–1371; that stretch reads EKKMSNYIQF…SMYSQNGKIN (157 aa). Zn(2+)-binding residues include Cys1379, Cys1391, and Cys1396. The segment at 1379–1396 adopts a C4-type; degenerate zinc-finger fold; that stretch reads CDEECCPVNFKRCCPLVC. The interval 1423–1430 is RNA-binding; sequence EYNHRHSV. The segment at 1434–1439 is oligomerization; it reads LEALFQ. Residues 1506-1521 lie within the membrane without spanning it; it reads ALTTFVSVAGIIYIIY. Residues 1522 to 2195 lie on the Cytoplasmic side of the membrane; that stretch reads KLFAGFQGAY…TLRRKWLDSF (674 aa). An O-(5'-phospho-RNA)-tyrosine modification is found at Tyr1531. In terms of domain architecture, Peptidase C3 spans 1551-1729; that stretch reads GPAFEFAVAM…FSAALLKHYF (179 aa). Residues His1590, Glu1621, and Cys1697 each act as for protease 3C activity in the active site. A RdRp catalytic domain is found at 1960–2076; sequence GHLIAFDYSG…SYPWPIDASL (117 aa). 2 residues coordinate Mg(2+): Asp1966 and Asp2062.

It belongs to the picornaviruses polyprotein family. Interacts with capsid protein VP1 and capsid protein VP3 to form heterotrimeric protomers. In terms of assembly, interacts with capsid protein VP0, and capsid protein VP3 to form heterotrimeric protomers. Five protomers subsequently associate to form pentamers which serve as building blocks for the capsid. Interacts with capsid protein VP2, capsid protein VP3 and capsid protein VP4 following cleavage of capsid protein VP0. As to quaternary structure, interacts with capsid protein VP1 and capsid protein VP3 in the mature capsid. Interacts with capsid protein VP0 and capsid protein VP1 to form heterotrimeric protomers. Five protomers subsequently associate to form pentamers which serve as building blocks for the capsid. Interacts with capsid protein VP4 in the mature capsid. Interacts with protein 2C; this interaction may be important for virion morphogenesis. In terms of assembly, interacts with capsid protein VP1 and capsid protein VP3. As to quaternary structure, homodimer. Homohexamer; forms a hexameric ring structure with 6-fold symmetry characteristic of AAA+ ATPases. Interacts (via N-terminus) with host RTN3 (via reticulon domain); this interaction is important for viral replication. Interacts with capsid protein VP3; this interaction may be important for virion morphogenesis. In terms of assembly, interacts with protein 3CD. As to quaternary structure, homodimer. Interacts with host GBF1. Interacts (via GOLD domain) with host ACBD3 (via GOLD domain); this interaction allows the formation of a viral protein 3A/ACBD3 heterotetramer with a 2:2 stoichiometry, which will stimulate the recruitment of host PI4KB in order to synthesize PI4P at the viral RNA replication sites. Interacts with RNA-directed RNA polymerase. In terms of assembly, interacts with protein 3AB and with RNA-directed RNA polymerase. As to quaternary structure, interacts with Viral protein genome-linked and with protein 3CD. Mg(2+) serves as cofactor. In terms of processing, specific enzymatic cleavages in vivo by the viral proteases yield processing intermediates and the mature proteins. Myristoylation is required for the formation of pentamers during virus assembly. Further assembly of 12 pentamers and a molecule of genomic RNA generates the provirion. Post-translationally, during virion maturation, immature virions are rendered infectious following cleavage of VP0 into VP4 and VP2. This maturation seems to be an autocatalytic event triggered by the presence of RNA in the capsid and it is followed by a conformational change infectious virion. In terms of processing, myristoylation is required during RNA encapsidation and formation of the mature virus particle. VPg is uridylylated by the polymerase into VPg-pUpU. This acts as a nucleotide-peptide primer for the genomic RNA replication.

The protein localises to the virion. The protein resides in the host cytoplasm. It localises to the host cytoplasmic vesicle membrane. Its subcellular location is the host nucleus. It catalyses the reaction a ribonucleoside 5'-triphosphate + H2O = a ribonucleoside 5'-diphosphate + phosphate + H(+). The catalysed reaction is Selective cleavage of Tyr-|-Gly bond in the picornavirus polyprotein.. The enzyme catalyses RNA(n) + a ribonucleoside 5'-triphosphate = RNA(n+1) + diphosphate. It carries out the reaction Selective cleavage of Gln-|-Gly bond in the poliovirus polyprotein. In other picornavirus reactions Glu may be substituted for Gln, and Ser or Thr for Gly.. With respect to regulation, replication or transcription is subject to high level of random mutations by the nucleotide analog ribavirin. Functionally, forms an icosahedral capsid of pseudo T=3 symmetry with capsid proteins VP2 and VP3. The capsid is 300 Angstroms in diameter, composed of 60 copies of each capsid protein and enclosing the viral positive strand RNA genome. Capsid protein VP1 mainly forms the vertices of the capsid. Capsid protein VP1 interacts with host cell receptor to provide virion attachment to target host cells. This attachment induces virion internalization. Tyrosine kinases are probably involved in the entry process. After binding to its receptor, the capsid undergoes conformational changes. Capsid protein VP1 N-terminus (that contains an amphipathic alpha-helix) and capsid protein VP4 are externalized. Together, they shape a pore in the host membrane through which viral genome is translocated to host cell cytoplasm. Its function is as follows. Forms an icosahedral capsid of pseudo T=3 symmetry with capsid proteins VP2 and VP3. The capsid is 300 Angstroms in diameter, composed of 60 copies of each capsid protein and enclosing the viral positive strand RNA genome. In terms of biological role, lies on the inner surface of the capsid shell. After binding to the host receptor, the capsid undergoes conformational changes. Capsid protein VP4 is released, Capsid protein VP1 N-terminus is externalized, and together, they shape a pore in the host membrane through which the viral genome is translocated into the host cell cytoplasm. Component of immature procapsids, which is cleaved into capsid proteins VP4 and VP2 after maturation. Allows the capsid to remain inactive before the maturation step. Functionally, cysteine protease that cleaves viral polyprotein and specific host proteins. It is responsible for the autocatalytic cleavage between the P1 and P2 regions, which is the first cleavage occurring in the polyprotein. Also cleaves the host translation initiation factor EIF4G1, in order to shut down the capped cellular mRNA translation. Inhibits the host nucleus-cytoplasm protein and RNA trafficking by cleaving host members of the nuclear pores. Counteracts stress granule formation probably by antagonizing its assembly or promoting its dissassembly. Its function is as follows. Plays an essential role in the virus replication cycle by acting as a viroporin. Creates a pore in the host endoplasmic reticulum and as a consequence releases Ca2+ in the cytoplasm of infected cell. In turn, high levels of cytoplasmic calcium may trigger membrane trafficking and transport of viral ER-associated proteins to viroplasms, sites of viral genome replication. In terms of biological role, induces and associates with structural rearrangements of intracellular membranes. Displays RNA-binding, nucleotide binding and NTPase activities. May play a role in virion morphogenesis and viral RNA encapsidation by interacting with the capsid protein VP3. Localizes the viral replication complex to the surface of membranous vesicles. Together with protein 3CD binds the Cis-Active RNA Element (CRE) which is involved in RNA synthesis initiation. Acts as a cofactor to stimulate the activity of 3D polymerase, maybe through a nucleid acid chaperone activity. Functionally, localizes the viral replication complex to the surface of membranous vesicles. It inhibits host cell endoplasmic reticulum-to-Golgi apparatus transport and causes the disassembly of the Golgi complex, possibly through GBF1 interaction. This would result in depletion of MHC, trail receptors and IFN receptors at the host cell surface. Plays an essential role in viral RNA replication by recruiting ACBD3 and PI4KB at the viral replication sites, thereby allowing the formation of the rearranged membranous structures where viral replication takes place. Its function is as follows. Acts as a primer for viral RNA replication and remains covalently bound to viral genomic RNA. VPg is uridylylated prior to priming replication into VPg-pUpU. The oriI viral genomic sequence may act as a template for this. The VPg-pUpU is then used as primer on the genomic RNA poly(A) by the RNA-dependent RNA polymerase to replicate the viral genome. During genome replication, the VPg-RNA linkage is removed by the host TDP2, thereby accelerating replication. During the late stage of the replication cycle, host TDP2 is excluded from sites of viral RNA synthesis and encapsidation, allowing for the generation of progeny virions. In terms of biological role, involved in the viral replication complex and viral polypeptide maturation. It exhibits protease activity with a specificity and catalytic efficiency that is different from protease 3C. Protein 3CD lacks polymerase activity. The 3C domain in the context of protein 3CD may have an RNA binding activity. Protein 3CD binds to the 5'UTR of the viral genome. Replicates the viral genomic RNA on the surface of intracellular membranes. May form linear arrays of subunits that propagate along a strong head-to-tail interaction called interface-I. Covalently attaches UMP to a tyrosine of VPg, which is used to prime RNA synthesis. The positive stranded RNA genome is first replicated at virus induced membranous vesicles, creating a dsRNA genomic replication form. This dsRNA is then used as template to synthesize positive stranded RNA genomes. ss(+)RNA genomes are either translated, replicated or encapsidated. Functionally, major viral protease that mediates proteolytic processing of the polyprotein. Cleaves host EIF5B, contributing to host translation shutoff. Also cleaves host PABPC1, contributing to host translation shutoff. Cleaves host NLRP1, triggers host N-glycine-mediated degradation of the autoinhibitory NLRP1 N-terminal fragment. The polypeptide is Genome polyprotein (Echovirus 11 (strain Gregory)).